We begin with the raw amino-acid sequence, 135 residues long: Transcriptional regulator HosA (135 aa).

The region spanning 4–134 (RNKAFHQLRQ…FMQLVRKMMN (131 aa)) is the HTH marR-type domain. Positions 48-71 (QVALIEAAVSTKATLAEMLARMEN) form a DNA-binding region, H-T-H motif.

In terms of biological role, involved in the temperature-dependent positive control of flagellum-driven swimming motility and cellular aggregation. Regulates fliC expression by directly interacting with fliC promoter. The polypeptide is Transcriptional regulator HosA (hosA) (Escherichia coli O111:H-).